The chain runs to 153 residues: MNKETKLQVEAIKNGTVIDHIPAQVGIKVLKLFDMHNSSQRVTIGLNLPSSALGNKDLLKIENVFINEEQASKLALYAPHATVNQIEDYQVVKKLALELPEFVSDVFECPNSNCITHNEPVASNFRVFEKKGDVRLKCKYCEKVFSREIVTER.

Zn(2+)-binding residues include cysteine 109, cysteine 114, cysteine 138, and cysteine 141.

The protein belongs to the PyrI family. As to quaternary structure, contains catalytic and regulatory chains. The cofactor is Zn(2+).

In terms of biological role, involved in allosteric regulation of aspartate carbamoyltransferase. This is Aspartate carbamoyltransferase regulatory chain from Vibrio vulnificus (strain YJ016).